The following is a 317-amino-acid chain: MTTALDQLKQYTTVVADTGDFQQLAQYQPQDATTNPSLILKAVQKDAYKPILEKTVRDHRNESTDFIIDRLLIAFGTEILKIIPGRVSTEVDARLSFDAKRSIDKAHELIKLYEAAGIERDRILIKLASTWEGIRAAETLQKEGIKCNMTLLFSLVQAAACAEAGAQLISPFVGRIYDWYKKQAGADWDEAKNGGANDPGVQSVRRIYTYYKTFGYKTEVMGASFRTTSQIVELAGCDLLTISPDLLQKLHDSNETVTRKLSPDALHDKPTERVAIDEASFRFQLNDEAMATEKLAEGIRVFAADAVKLEKLIEALR.

Lys126 acts as the Schiff-base intermediate with substrate in catalysis.

This sequence belongs to the transaldolase family. Type 1 subfamily. Homodimer.

It localises to the cytoplasm. The catalysed reaction is D-sedoheptulose 7-phosphate + D-glyceraldehyde 3-phosphate = D-erythrose 4-phosphate + beta-D-fructose 6-phosphate. It participates in carbohydrate degradation; pentose phosphate pathway; D-glyceraldehyde 3-phosphate and beta-D-fructose 6-phosphate from D-ribose 5-phosphate and D-xylulose 5-phosphate (non-oxidative stage): step 2/3. Its function is as follows. Transaldolase is important for the balance of metabolites in the pentose-phosphate pathway. This is Transaldolase from Burkholderia multivorans (strain ATCC 17616 / 249).